A 510-amino-acid chain; its full sequence is Bifunctional purine biosynthesis protein PurH (510 aa).

Residues 1-142 (MRALLSVSDK…KNYKDVMVLC (142 aa)) enclose the MGS-like domain.

This sequence belongs to the PurH family.

It catalyses the reaction (6R)-10-formyltetrahydrofolate + 5-amino-1-(5-phospho-beta-D-ribosyl)imidazole-4-carboxamide = 5-formamido-1-(5-phospho-D-ribosyl)imidazole-4-carboxamide + (6S)-5,6,7,8-tetrahydrofolate. The enzyme catalyses IMP + H2O = 5-formamido-1-(5-phospho-D-ribosyl)imidazole-4-carboxamide. It participates in purine metabolism; IMP biosynthesis via de novo pathway; 5-formamido-1-(5-phospho-D-ribosyl)imidazole-4-carboxamide from 5-amino-1-(5-phospho-D-ribosyl)imidazole-4-carboxamide (10-formyl THF route): step 1/1. Its pathway is purine metabolism; IMP biosynthesis via de novo pathway; IMP from 5-formamido-1-(5-phospho-D-ribosyl)imidazole-4-carboxamide: step 1/1. The protein is Bifunctional purine biosynthesis protein PurH of Campylobacter jejuni (strain RM1221).